The sequence spans 177 residues: Disulfide bond formation protein B (177 aa).

Topologically, residues 1–14 are cytoplasmic; sequence MMVWNWIDRTPRRV. A helical transmembrane segment spans residues 15-31; sequence LALISLACVALLACGLY. At 32-49 the chain is on the periplasmic side; that stretch reads LQHVVGLVPCPMCIVQRY. An intrachain disulfide couples C41 to C44. A helical membrane pass occupies residues 50–64; it reads ALIGLALLTGLASAR. Topologically, residues 65–70 are cytoplasmic; the sequence is SAKGWW. A helical transmembrane segment spans residues 71 to 89; it reads LTLSALAALTAGFGATVAA. The Periplasmic segment spans residues 90–145; the sequence is RQSWLQWYPPQSVSCGRDFYGMIESFPLSRAIPMILRGSGDCAAVDWSLLGGSIAN. Residues C104 and C131 are joined by a disulfide bond. Residues 146–164 form a helical membrane-spanning segment; the sequence is WSFLCFALLGLLLLALLAR. Over 165 to 177 the chain is Cytoplasmic; it reads GVRGARQRAPAPV.

It belongs to the DsbB family.

It localises to the cell inner membrane. Functionally, required for disulfide bond formation in some periplasmic proteins. Acts by oxidizing the DsbA protein. This Verminephrobacter eiseniae (strain EF01-2) protein is Disulfide bond formation protein B.